A 325-amino-acid chain; its full sequence is MFLQSRVSRLLAQLRAAGQLLGAPRPWPGPSPGATRTRSSACGPPASLSAHHPRARTSAGVGAWGAAAVGRRAGVRTWAPLAMAAKVDLSTSTDWKEAKSFLKGLSDKQREEHYFCRDFVRLKKIPTWKETAKGVTVKVEEPKYKKDKQLNEKISLFRGDITKLEVDAIVNAANSSLLGGGGVDGCIHRAAGPLLTDECRTLQNCETGKAKITCGYRLPAKYVIHTVGPIAHGEPSASQAAELRSCYLSSLDLLLEHRLRSAAFPCISTGVFGYPNEAAAEVVLTALREWLEQHKDKVDRLIICVFLEKDENIYRERLPHYFPVA.

Residues 21 to 55 (LGAPRPWPGPSPGATRTRSSACGPPASLSAHHPRA) are disordered. 3 positions are modified to N6-succinyllysine: Lys-96, Lys-103, and Lys-129. Lys-138 is covalently cross-linked (Glycyl lysine isopeptide (Lys-Gly) (interchain with G-Cter in SUMO2)). The 182-residue stretch at 141–322 (EPKYKKDKQL…IYRERLPHYF (182 aa)) folds into the Macro domain. 159–161 (GDI) contacts substrate. N6-acetyllysine is present on Lys-163. Substrate is bound by residues 172–174 (AAN), 179–184 (GGGGVD), 267–273 (ISTGVFG), and Phe-306.

Belongs to the MacroD-type family. MacroD1/2-like subfamily. In terms of assembly, interacts with ESR1; Interacts in a manner that is estrogen independent but is enhanced by estrogen. Interacts (via macro domain) with AR.

The protein resides in the nucleus. It carries out the reaction 3''-O-acetyl-ADP-D-ribose + H2O = ADP-D-ribose + acetate + H(+). The enzyme catalyses 2''-O-acetyl-ADP-D-ribose + H2O = ADP-D-ribose + acetate + H(+). It catalyses the reaction 4-O-(ADP-D-ribosyl)-L-aspartyl-[protein] + H2O = L-aspartyl-[protein] + ADP-D-ribose + H(+). The catalysed reaction is 5-O-(ADP-D-ribosyl)-L-glutamyl-[protein] + H2O = L-glutamyl-[protein] + ADP-D-ribose + H(+). It carries out the reaction alpha-NAD(+) + H2O = ADP-D-ribose + nicotinamide + H(+). With respect to regulation, subject to competitive inhibition by the product ADP-ribose. Its function is as follows. Removes ADP-ribose from aspartate and glutamate residues in proteins bearing a single ADP-ribose moiety. Inactive towards proteins bearing poly-ADP-ribose. Deacetylates O-acetyl-ADP ribose, a signaling molecule generated by the deacetylation of acetylated lysine residues in histones and other proteins. Plays a role in estrogen signaling. Binds to androgen receptor (AR) and amplifies the transactivation function of AR in response to androgen. May play an important role in carcinogenesis and/or progression of hormone-dependent cancers by feed-forward mechanism that activates ESR1 transactivation. Could be an ESR1 coactivator, providing a positive feedback regulatory loop for ESR1 signal transduction. Could be involved in invasive growth by down-regulating CDH1 in endometrial cancer cells. Enhances ESR1-mediated transcription activity. The chain is ADP-ribose glycohydrolase MACROD1 (MACROD1) from Bos taurus (Bovine).